A 256-amino-acid chain; its full sequence is Trypsin alpha (256 aa).

The first 22 residues, 1–22, serve as a signal peptide directing secretion; it reads MLKIVILLSAVVCALGGTVPEG. A propeptide spans 23-30 (activation peptide); that stretch reads LLPQLDGR. In terms of domain architecture, Peptidase S1 spans 31 to 254; the sequence is IVGGSATTIS…LRSWVVSTAN (224 aa). Cysteine 56 and cysteine 72 are oxidised to a cystine. Residues histidine 71 and aspartate 116 each act as charge relay system in the active site. Intrachain disulfides connect cysteine 180–cysteine 197 and cysteine 206–cysteine 230. The active-site Charge relay system is the serine 210.

Belongs to the peptidase S1 family. As to expression, synthesized in the midgut of both larvae and adults, primarily in the ventriculus and gastric caeca.

The protein resides in the secreted. It localises to the extracellular space. The enzyme catalyses Preferential cleavage: Arg-|-Xaa, Lys-|-Xaa.. The protein is Trypsin alpha (alphaTry) of Drosophila melanogaster (Fruit fly).